Here is a 245-residue protein sequence, read N- to C-terminus: 3-deoxy-manno-octulosonate cytidylyltransferase (245 aa).

This sequence belongs to the KdsB family.

It is found in the cytoplasm. The catalysed reaction is 3-deoxy-alpha-D-manno-oct-2-ulosonate + CTP = CMP-3-deoxy-beta-D-manno-octulosonate + diphosphate. It participates in nucleotide-sugar biosynthesis; CMP-3-deoxy-D-manno-octulosonate biosynthesis; CMP-3-deoxy-D-manno-octulosonate from 3-deoxy-D-manno-octulosonate and CTP: step 1/1. Its pathway is bacterial outer membrane biogenesis; lipopolysaccharide biosynthesis. Activates KDO (a required 8-carbon sugar) for incorporation into bacterial lipopolysaccharide in Gram-negative bacteria. The sequence is that of 3-deoxy-manno-octulosonate cytidylyltransferase from Rhodopseudomonas palustris (strain BisB18).